A 134-amino-acid polypeptide reads, in one-letter code: Ribonuclease VapC1 (134 aa).

Residues 4-123 (IIDTSIIIAL…LNVKDFKRIQ (120 aa)) enclose the PINc domain. Mg(2+)-binding residues include D6 and D97.

This sequence belongs to the PINc/VapC protein family. Requires Mg(2+) as cofactor.

In terms of biological role, toxic component of a type II toxin-antitoxin (TA) system. Has ssRNase activity. Upon expression in E.coli inhibits growth in liquid culture; this toxic effect is neutralized by coexpression with cognate antitoxin VapB1. Its RNase activity is partially inhibited in vitro by VapB1. This is Ribonuclease VapC1 from Rickettsia felis (strain ATCC VR-1525 / URRWXCal2) (Rickettsia azadi).